The following is a 183-amino-acid chain: Oligoribonuclease (183 aa).

The Exonuclease domain occupies 8–171; the sequence is LIWIDLEMTG…DDIRDSIHEL (164 aa). Tyr-129 is an active-site residue.

This sequence belongs to the oligoribonuclease family.

Its subcellular location is the cytoplasm. In terms of biological role, 3'-to-5' exoribonuclease specific for small oligoribonucleotides. The polypeptide is Oligoribonuclease (Halorhodospira halophila (strain DSM 244 / SL1) (Ectothiorhodospira halophila (strain DSM 244 / SL1))).